The chain runs to 28 residues: Expansin-B1 (28 aa).

The region spanning M11–G28 is the Expansin-like CBD domain.

This sequence belongs to the expansin family. Expansin B subfamily.

Its subcellular location is the secreted. The protein resides in the cell wall. It is found in the membrane. Its function is as follows. May cause loosening and extension of plant cell walls by disrupting non-covalent bonding between cellulose microfibrils and matrix glucans. The chain is Expansin-B1 from Pseudotsuga menziesii (Douglas-fir).